A 444-amino-acid chain; its full sequence is MVEKFDKIYDYYVDKSYEPNKKRDIIAVFRITPAEGYTIEQVAGGVAAESSTGTWTTLYNWYEEERWADLSAKAYDFIDMGDGSWIVKIAYPFHAFEEANLPGLLASIAGNVFGMRRAKGLRLEDMYFPEKLIREFSGPAFGIEGVRKMLEIKDRPIYGVVPKPKVGYSPEEFEKLSYELLLNGADYMKDDENLTSPWYNRFEERAETIAKIIEKVESETGEKKTWFANITADVREMERRLEILADLGLKHAMVDVVITGWGALEYIRDLAADYGLAIHGHRAMHATFTRNPYHGISMFVLAKLYRLIGIDQLHVGTAGAGKLEGGKWDVIQNARILREEHYKPDENDVFHLEQKFYSIKPAFPTSSGGLHPGNLPIVIDALGTDIVLQLGGGTLGHPDGPAAGARAVRQAIDALVQGIPLDEYAKTHKELARALEKWGHVTPI.

The active-site Proton acceptor is the Lys-163. Lys-165 lines the substrate pocket. Mg(2+) is bound by residues Lys-189, Asp-191, and Glu-192. Residue Lys-189 is modified to N6-carboxylysine. Catalysis depends on His-281, which acts as the Proton acceptor. Residues Arg-282, His-314, 367–369, and 389–392 each bind substrate; these read SGG and QLGG.

It belongs to the RuBisCO large chain family. Type III subfamily. Homodimer or homodecamer. In contrast to form I RuBisCO, the form III RuBisCO is composed solely of large subunits. The cofactor is Mg(2+).

It catalyses the reaction 2 (2R)-3-phosphoglycerate + 2 H(+) = D-ribulose 1,5-bisphosphate + CO2 + H2O. It carries out the reaction D-ribulose 1,5-bisphosphate + O2 = 2-phosphoglycolate + (2R)-3-phosphoglycerate + 2 H(+). Catalyzes the addition of molecular CO(2) and H(2)O to ribulose 1,5-bisphosphate (RuBP), generating two molecules of 3-phosphoglycerate (3-PGA). Functions in an archaeal AMP degradation pathway, together with AMP phosphorylase and R15P isomerase. The sequence is that of Ribulose bisphosphate carboxylase from Thermococcus onnurineus (strain NA1).